We begin with the raw amino-acid sequence, 368 residues long: UDP-N-acetylglucosamine--N-acetylmuramyl-(pentapeptide) pyrophosphoryl-undecaprenol N-acetylglucosamine transferase (368 aa).

UDP-N-acetyl-alpha-D-glucosamine-binding positions include 10-12 (TGG), Asn124, Ser196, Ile251, and Gln296.

The protein belongs to the glycosyltransferase 28 family. MurG subfamily.

The protein localises to the cell membrane. It catalyses the reaction Mur2Ac(oyl-L-Ala-gamma-D-Glu-L-Lys-D-Ala-D-Ala)-di-trans,octa-cis-undecaprenyl diphosphate + UDP-N-acetyl-alpha-D-glucosamine = beta-D-GlcNAc-(1-&gt;4)-Mur2Ac(oyl-L-Ala-gamma-D-Glu-L-Lys-D-Ala-D-Ala)-di-trans,octa-cis-undecaprenyl diphosphate + UDP + H(+). It functions in the pathway cell wall biogenesis; peptidoglycan biosynthesis. Its function is as follows. Cell wall formation. Catalyzes the transfer of a GlcNAc subunit on undecaprenyl-pyrophosphoryl-MurNAc-pentapeptide (lipid intermediate I) to form undecaprenyl-pyrophosphoryl-MurNAc-(pentapeptide)GlcNAc (lipid intermediate II). This Limosilactobacillus fermentum (strain NBRC 3956 / LMG 18251) (Lactobacillus fermentum) protein is UDP-N-acetylglucosamine--N-acetylmuramyl-(pentapeptide) pyrophosphoryl-undecaprenol N-acetylglucosamine transferase.